The chain runs to 68 residues: Large ribosomal subunit protein uL29 (68 aa).

This sequence belongs to the universal ribosomal protein uL29 family.

This is Large ribosomal subunit protein uL29 from Prochlorococcus marinus (strain SARG / CCMP1375 / SS120).